A 138-amino-acid chain; its full sequence is Endoribonuclease YbeY (138 aa).

3 residues coordinate Zn(2+): His105, His109, and Asp115.

This sequence belongs to the endoribonuclease YbeY family. Zn(2+) serves as cofactor.

It is found in the cytoplasm. Single strand-specific metallo-endoribonuclease involved in late-stage 70S ribosome quality control and in maturation of the 3' terminus of the 16S rRNA. In Chlorobium phaeobacteroides (strain BS1), this protein is Endoribonuclease YbeY.